The following is a 292-amino-acid chain: 4-hydroxy-tetrahydrodipicolinate synthase (292 aa).

Pyruvate is bound at residue threonine 45. Tyrosine 133 acts as the Proton donor/acceptor in catalysis. Lysine 161 acts as the Schiff-base intermediate with substrate in catalysis. Isoleucine 203 contacts pyruvate.

It belongs to the DapA family. In terms of assembly, homotetramer; dimer of dimers.

It localises to the cytoplasm. It catalyses the reaction L-aspartate 4-semialdehyde + pyruvate = (2S,4S)-4-hydroxy-2,3,4,5-tetrahydrodipicolinate + H2O + H(+). The protein operates within amino-acid biosynthesis; L-lysine biosynthesis via DAP pathway; (S)-tetrahydrodipicolinate from L-aspartate: step 3/4. Its function is as follows. Catalyzes the condensation of (S)-aspartate-beta-semialdehyde [(S)-ASA] and pyruvate to 4-hydroxy-tetrahydrodipicolinate (HTPA). The chain is 4-hydroxy-tetrahydrodipicolinate synthase from Dechloromonas aromatica (strain RCB).